A 99-amino-acid chain; its full sequence is Acylphosphatase (99 aa).

Residues 10–99 (RLTAFVHGHV…PRGVEGFTER (90 aa)) form the Acylphosphatase-like domain. Active-site residues include Arg-25 and Asn-43.

It belongs to the acylphosphatase family.

It catalyses the reaction an acyl phosphate + H2O = a carboxylate + phosphate + H(+). The sequence is that of Acylphosphatase (acyP) from Corynebacterium efficiens (strain DSM 44549 / YS-314 / AJ 12310 / JCM 11189 / NBRC 100395).